An 827-amino-acid chain; its full sequence is Periplasmic nitrate reductase (827 aa).

A signal peptide (tat-type signal) is located at residues 1 to 32; sequence MELNRRDFMKANAAAAAALAAGITLPVKNVYA. The 4Fe-4S Mo/W bis-MGD-type domain maps to 37–93; that stretch reads IKWDKAPCRFCGTGCSVLVGTQNGRMVASQGDPDAEVNRGLNCIKGYFLPKIIYGKD. [4Fe-4S] cluster is bound by residues C44, C47, C51, and C79. Residues K81, Q148, N173, C177, 210 to 217, 241 to 245, M371, Q375, N481, 507 to 508, K530, D557, and 717 to 726 contribute to the Mo-bis(molybdopterin guanine dinucleotide) site; these read WGSNMAEM, STFEH, SD, and TGRVLEHWHS. Substrate is bound at residue F793. Mo-bis(molybdopterin guanine dinucleotide) contacts are provided by N801 and K818.

Belongs to the prokaryotic molybdopterin-containing oxidoreductase family. NasA/NapA/NarB subfamily. As to quaternary structure, component of the periplasmic nitrate reductase NapAB complex composed of NapA and NapB. [4Fe-4S] cluster is required as a cofactor. It depends on Mo-bis(molybdopterin guanine dinucleotide) as a cofactor. Post-translationally, predicted to be exported by the Tat system. The position of the signal peptide cleavage has not been experimentally proven.

Its subcellular location is the periplasm. It carries out the reaction 2 Fe(II)-[cytochrome] + nitrate + 2 H(+) = 2 Fe(III)-[cytochrome] + nitrite + H2O. Functionally, catalytic subunit of the periplasmic nitrate reductase complex NapAB. Receives electrons from NapB and catalyzes the reduction of nitrate to nitrite. The chain is Periplasmic nitrate reductase from Glaesserella parasuis serovar 5 (strain SH0165) (Haemophilus parasuis).